We begin with the raw amino-acid sequence, 59 residues long: Large ribosomal subunit protein bL33 (59 aa).

This sequence belongs to the bacterial ribosomal protein bL33 family.

The chain is Large ribosomal subunit protein bL33 from Neorickettsia sennetsu (strain ATCC VR-367 / Miyayama) (Ehrlichia sennetsu).